Here is a 460-residue protein sequence, read N- to C-terminus: Ribosome biogenesis protein YTM1 (460 aa).

The tract at residues 8 to 89 (VKIRFFTREK…EASLNVEYTR (82 aa)) is ubiquitin-like (UBL) domain. The segment at 99-460 (SFSNEDWVSS…INKGDNIFKN (362 aa)) is sufficient for interaction with ERB1 and association with 66S pre-ribosomes. WD repeat units follow at residues 101-140 (SNED…QKQY), 142-180 (GHSG…LKLT), 206-244 (GHKA…MTVV), 285-325 (SHTA…CIDT), 327-366 (TTSY…SSKV), 373-413 (GHKN…PMYT), and 424-460 (GVND…IFKN).

It belongs to the WD repeat WDR12/YTM1 family. As to quaternary structure, component of the NOP7 complex, composed of ERB1, NOP7 and YTM1. The complex is held together by ERB1, which interacts with NOP7 via its N-terminal domain and with YTM1 via a high-affinity interaction between the seven-bladed beta-propeller domains of the 2 proteins. The NOP7 complex associates with the 66S pre-ribosome. Interacts (via UBL domain) with MDN1 (via VWFA/MIDAS domain).

It is found in the nucleus. The protein resides in the nucleolus. The protein localises to the nucleoplasm. In terms of biological role, component of the NOP7 complex, which is required for maturation of the 25S and 5.8S ribosomal RNAs and formation of the 60S ribosome. The sequence is that of Ribosome biogenesis protein YTM1 from Saccharomyces cerevisiae (strain YJM789) (Baker's yeast).